Reading from the N-terminus, the 218-residue chain is N-(5'-phosphoribosyl)anthranilate isomerase (218 aa).

Belongs to the TrpF family.

The enzyme catalyses N-(5-phospho-beta-D-ribosyl)anthranilate = 1-(2-carboxyphenylamino)-1-deoxy-D-ribulose 5-phosphate. It functions in the pathway amino-acid biosynthesis; L-tryptophan biosynthesis; L-tryptophan from chorismate: step 3/5. This chain is N-(5'-phosphoribosyl)anthranilate isomerase, found in Bordetella pertussis (strain Tohama I / ATCC BAA-589 / NCTC 13251).